An 832-amino-acid polypeptide reads, in one-letter code: Receptor-interacting serine/threonine-protein kinase 4 (832 aa).

The Protein kinase domain maps to 22–286; that stretch reads FTGWEKVGSG…QGNGLNGELI (265 aa). Residues 28-36 and K51 contribute to the ATP site; that span reads VGSGGFGQV. A Glycyl lysine isopeptide (Lys-Gly) (interchain with G-Cter in ubiquitin) cross-link involves residue K51. Residue D143 is the Proton acceptor of the active site. A Glycyl lysine isopeptide (Lys-Gly) (interchain with G-Cter in ubiquitin) cross-link involves residue K145. Disordered regions lie at residues 325–368 and 389–424; these read QEIT…RLKR and SGVS…GVSS. Over residues 329–342 the composition is skewed to acidic residues; that stretch reads SETEDLCEKPDDEV. Over residues 343–359 the composition is skewed to basic and acidic residues; sequence KETAHDLDVKSPPEPRS. The segment covering 403-424 has biased composition (low complexity); sequence RSSSESKLPSSGSGKRLSGVSS. 10 ANK repeats span residues 485–514, 518–547, 551–580, 584–613, 617–647, 651–680, 684–713, 717–746, 750–780, and 782–811; these read SGAS…NPNL, RGST…SVNA, DQWT…SVNE, EGRT…DVSL, DAWL…SVNA, DGRT…DVNV, LAQT…GKEA, DGYT…DVLA, LNQT…DLFD, and QGLS…HINL.

Belongs to the protein kinase superfamily. TKL Ser/Thr protein kinase family. In terms of assembly, interacts with PRKCB. Interacts with TRAF1, TRAF2, TRAF3 and TRAF5. Interacts with BIRC2/c-IAP1, BIRC3/c-IAP2 and XIAP/BIRC4. May be phosphorylated by MAP3K2 and MAP3K3. Post-translationally, proteolytically cleaved by during Fas-induced apoptosis. Cleavage at Asp-388 and Asp-426. In terms of processing, polyubiquitinated with 'Lys-48' and 'Lys-63'-linked chains by BIRC2/c-IAP1 and BIRC3/c-IAP2, leading to activation of NF-kappa-B. Expressed in hair follicles and skin.

It localises to the cytoplasm. The protein localises to the membrane. It catalyses the reaction L-seryl-[protein] + ATP = O-phospho-L-seryl-[protein] + ADP + H(+). The enzyme catalyses L-threonyl-[protein] + ATP = O-phospho-L-threonyl-[protein] + ADP + H(+). Functionally, serine/threonine protein kinase. Required for embryonic skin development and correct skin homeostasis in adults, via phosphorylation of PKP1 and subsequent promotion of keratinocyte differentiation and cell adhesion. It is a direct transcriptional target of TP63. Plays a role in NF-kappa-B activation. In Homo sapiens (Human), this protein is Receptor-interacting serine/threonine-protein kinase 4 (RIPK4).